Here is a 603-residue protein sequence, read N- to C-terminus: Elongation factor 4 (603 aa).

Residues Ser7–Gln189 enclose the tr-type G domain. GTP is bound by residues Asp19–Thr24 and Asn136–Asp139.

Belongs to the TRAFAC class translation factor GTPase superfamily. Classic translation factor GTPase family. LepA subfamily.

Its subcellular location is the cell inner membrane. It carries out the reaction GTP + H2O = GDP + phosphate + H(+). Functionally, required for accurate and efficient protein synthesis under certain stress conditions. May act as a fidelity factor of the translation reaction, by catalyzing a one-codon backward translocation of tRNAs on improperly translocated ribosomes. Back-translocation proceeds from a post-translocation (POST) complex to a pre-translocation (PRE) complex, thus giving elongation factor G a second chance to translocate the tRNAs correctly. Binds to ribosomes in a GTP-dependent manner. In Rippkaea orientalis (strain PCC 8801 / RF-1) (Cyanothece sp. (strain PCC 8801)), this protein is Elongation factor 4.